Consider the following 180-residue polypeptide: Putative 3-methyladenine DNA glycosylase (180 aa).

This sequence belongs to the DNA glycosylase MPG family.

In Ehrlichia chaffeensis (strain ATCC CRL-10679 / Arkansas), this protein is Putative 3-methyladenine DNA glycosylase.